We begin with the raw amino-acid sequence, 233 residues long: 7-cyano-7-deazaguanine synthase (233 aa).

ATP is bound at residue 18–28; that stretch reads FSGGQDSTTCL. 4 residues coordinate Zn(2+): cysteine 198, cysteine 213, cysteine 216, and cysteine 219.

It belongs to the QueC family. It depends on Zn(2+) as a cofactor.

The enzyme catalyses 7-carboxy-7-deazaguanine + NH4(+) + ATP = 7-cyano-7-deazaguanine + ADP + phosphate + H2O + H(+). Its pathway is purine metabolism; 7-cyano-7-deazaguanine biosynthesis. In terms of biological role, catalyzes the ATP-dependent conversion of 7-carboxy-7-deazaguanine (CDG) to 7-cyano-7-deazaguanine (preQ(0)). The chain is 7-cyano-7-deazaguanine synthase from Wolinella succinogenes (strain ATCC 29543 / DSM 1740 / CCUG 13145 / JCM 31913 / LMG 7466 / NCTC 11488 / FDC 602W) (Vibrio succinogenes).